Here is a 211-residue protein sequence, read N- to C-terminus: GTP pyrophosphokinase YjbM (211 aa).

Guanosine 3'-diphosphate 5'-triphosphate-binding positions include 21 to 28 (KVKLKGIR), 41 to 42 (EF), and 46 to 48 (RVK). ATP contacts are provided by residues 46–48 (RVK), serine 52, 56–59 (KARR), aspartate 72, and arginine 77. Arginine 59 contacts guanosine 3'-diphosphate 5'-triphosphate. Residue aspartate 72 participates in Mg(2+) binding. Guanosine 3'-diphosphate 5'-triphosphate contacts are provided by residues arginine 105, 112–114 (KES), and histidine 120. Glutamate 139 (proton acceptor) is an active-site residue. Residues asparagine 148 and 151–155 (ATIEH) contribute to the guanosine 3'-diphosphate 5'-triphosphate site.

This sequence belongs to the RelA/SpoT family. In terms of assembly, homotetramer.

The catalysed reaction is GTP + ATP = guanosine 3'-diphosphate 5'-triphosphate + AMP. It carries out the reaction GDP + ATP = guanosine 3',5'-bis(diphosphate) + AMP. It participates in purine metabolism; ppGpp biosynthesis; ppGpp from GTP: step 1/2. Allosterically regulated by its own products; pppGpp simulates synthesis 10-fold more than ppGpp. 2 pppGpp molecules bind in a regulatory cleft in the middle of the tetramer in an asymmetric manner. There is a specific contact of Lys-25 to the gamma-phosphate of pppGpp, explaining why pppGpp stimulates activity but ppGpp does not. Its function is as follows. Functions as a (p)ppGpp synthase; GDP can be used instead of GTP, resulting in an increase of (p)ppGpp synthesis. The enzyme binds ATP, then GDP or GTP and catalysis is highly cooperative. In eubacteria ppGpp (guanosine 3'-diphosphate 5'-diphosphate) is a mediator of the stringent response that coordinates a variety of cellular activities in response to changes in nutritional abundance. Probably has a minor role in the stringent response. This Bacillus subtilis (strain 168) protein is GTP pyrophosphokinase YjbM (yjbM).